The chain runs to 513 residues: Leucine-rich repeat-containing protein 24 (513 aa).

The N-terminal stretch at 1–20 is a signal peptide; that stretch reads MALRAPALLPLLLLLLPLRA. One can recognise an LRRNT domain in the interval 21-50; that stretch reads AGCPAACRCYSATVECGALRLRVVPLGIPP. LRR repeat units follow at residues 51–72, 75–96, 99–120, 123–144, 147–168, and 171–192; these read GTQT…ALAP, ALRR…AFRA, RLLE…AFVG, QLRV…TFLH, RLQE…ALAG, and SLAL…ALQP. An LRRCT domain is found at 204 to 259; that stretch reads NPWRCDCALHWLGAWIKEGGQRLLTSRDRKIMCAEPPRLALQSLLDVSHSSLICIP. The Ig-like C2-type domain maps to 260–361; that stretch reads PSVHVQPLEL…GAARVPFRLL (102 aa). An intrachain disulfide couples C281 to C345. Residues N334 and N363 are each glycosylated (N-linked (GlcNAc...) asparagine). Residues 365–391 form a disordered region; sequence SRQQPQQPAQPPPPAARPAGSEPRPEA. Residues 406–426 form a helical membrane-spanning segment; it reads AIAAAIALLALTALLLVAMIC.

The protein resides in the membrane. This chain is Leucine-rich repeat-containing protein 24 (LRRC24), found in Homo sapiens (Human).